The sequence spans 298 residues: Plasmodesmata-located protein 7 (298 aa).

Positions 1–30 (MPMAKLRNIIKTLSIFFFLIAATAPSLSSA) are cleaved as a signal peptide. Over 31–258 (TSATDTFVFG…YKTNYGGEKT (228 aa)) the chain is Extracellular. Gnk2-homologous domains follow at residues 35–139 (DTFV…NISF) and 140–240 (LGQE…TDGA). Intrachain disulfides connect Cys42–Cys117, Cys93–Cys102, Cys105–Cys130, Cys152–Cys218, Cys194–Cys203, and Cys206–Cys231. The chain crosses the membrane as a helical span at residues 259–279 (FAIIIGLLAAVVLLIIFLLFL). The necessary and sufficient for plasmodesmal targeting stretch occupies residues 259–279 (FAIIIGLLAAVVLLIIFLLFL). Residues 280–298 (RGVCSRGGDFSILHSFTLI) are Cytoplasmic-facing.

It belongs to the cysteine-rich repeat secretory protein family. Plasmodesmata-located proteins (PDLD) subfamily. As to quaternary structure, (Microbial infection) Interacts with Grapevine fanleaf virus (GFLV) 2B-MP. As to expression, highly expressed in lateral root and elongation zone.

The protein resides in the cell membrane. Its subcellular location is the cell junction. The protein localises to the plasmodesma. Its function is as follows. Modulates cell-to-cell trafficking. The chain is Plasmodesmata-located protein 7 from Arabidopsis thaliana (Mouse-ear cress).